A 142-amino-acid chain; its full sequence is Coactosin-like protein (142 aa).

The residue at position 2 (alanine 2) is an N-acetylalanine. Residues 2–130 (ATKIDKEACR…EEDFIRSELK (129 aa)) form the ADF-H domain. Phosphoserine is present on serine 23. The interval 66-75 (TGDAMSKRSK) is flexible and important for F-actin binding. An N6-acetyllysine modification is found at lysine 102. Position 141 is a phosphoserine (serine 141).

It belongs to the actin-binding proteins ADF family. Coactosin subfamily. Interacts with 5-lipoxygenase (ALOX5/5LO) in a calcium-independent manner. Binds to F-actin with a stoichiometry of 1:2.

Its subcellular location is the cytoplasm. It localises to the cytoskeleton. The protein resides in the nucleus. In terms of biological role, binds to F-actin in a calcium-independent manner. Has no direct effect on actin depolymerization. Acts as a chaperone for ALOX5 (5LO), influencing both its stability and activity in leukotrienes synthesis. This chain is Coactosin-like protein, found in Rattus norvegicus (Rat).